Consider the following 651-residue polypeptide: Intraflagellar transport protein 70A (651 aa).

7 TPR repeats span residues Asp-8 to Ser-41, Arg-42 to Val-75, Pro-140 to Lys-173, Asp-175 to Glu-207, Leu-372 to Thr-405, Ile-410 to His-443, and Ile-445 to Asn-478. The stretch at Tyr-494 to Asn-521 forms a coiled coil. One copy of the TPR 8 repeat lies at Cys-530–Lys-563.

Belongs to the TTC30/dfy-1/fleer family.

It localises to the cell projection. The protein localises to the cilium. In terms of biological role, required for polyglutamylation of axonemal tubulin. Plays a role in anterograde intraflagellar transport (IFT), the process by which cilia precursors are transported from the base of the cilium to the site of their incorporation at the tip. The polypeptide is Intraflagellar transport protein 70A (ift70a) (Xenopus tropicalis (Western clawed frog)).